A 206-amino-acid polypeptide reads, in one-letter code: MTYIVALTGGIGSGKSTVANAFANLGVPLVDADIIARQVVEPGTSALAAIASRYGENILQQDGSLNRAALRQKIFSEQQEKAWLNSLLHPLIQQETQRQLAGIDQPYALWVVPLLVENGLHHRADRVLVVDVTPDIQLARTMARDGITRQQAENILASQVSRQQRLACADDIIDNSGDPLMIAQHVASLHHRYLKLATAAQQDLHQ.

The DPCK domain maps to 4 to 200; it reads IVALTGGIGS…HRYLKLATAA (197 aa). 12–17 serves as a coordination point for ATP; that stretch reads GSGKST.

Belongs to the CoaE family.

The protein localises to the cytoplasm. The catalysed reaction is 3'-dephospho-CoA + ATP = ADP + CoA + H(+). It functions in the pathway cofactor biosynthesis; coenzyme A biosynthesis; CoA from (R)-pantothenate: step 5/5. Functionally, catalyzes the phosphorylation of the 3'-hydroxyl group of dephosphocoenzyme A to form coenzyme A. The protein is Dephospho-CoA kinase of Yersinia pestis.